The following is a 363-amino-acid chain: Aminomethyltransferase (363 aa).

Belongs to the GcvT family. In terms of assembly, the glycine cleavage system is composed of four proteins: P, T, L and H.

The enzyme catalyses N(6)-[(R)-S(8)-aminomethyldihydrolipoyl]-L-lysyl-[protein] + (6S)-5,6,7,8-tetrahydrofolate = N(6)-[(R)-dihydrolipoyl]-L-lysyl-[protein] + (6R)-5,10-methylene-5,6,7,8-tetrahydrofolate + NH4(+). Functionally, the glycine cleavage system catalyzes the degradation of glycine. This is Aminomethyltransferase from Thermotoga neapolitana (strain ATCC 49049 / DSM 4359 / NBRC 107923 / NS-E).